Here is a 316-residue protein sequence, read N- to C-terminus: tRNA selenocysteine 1-associated protein 1-like (316 aa).

RRM domains follow at residues 6-89 (TSLW…YATY) and 99-178 (FSVF…IAVN). Pro residues predominate over residues 239 to 248 (PPMGMPPMPP). Residues 239 to 285 (PPMGMPPMPPDMQGSTEAHDGTEEVEEDPSEDPNPQVDVEELNRQYM) form a disordered region.

The protein belongs to the RRM TRSPAP family.

The protein resides in the nucleus. The protein localises to the cytoplasm. Its function is as follows. Involved in the early steps of selenocysteine biosynthesis and tRNA(Sec) charging to the later steps resulting in the cotranslational incorporation of selenocysteine into selenoproteins. This chain is tRNA selenocysteine 1-associated protein 1-like (trnau1apl), found in Danio rerio (Zebrafish).